Here is a 177-residue protein sequence, read N- to C-terminus: Large ribosomal subunit protein uL6 (177 aa).

It belongs to the universal ribosomal protein uL6 family. Part of the 50S ribosomal subunit.

Functionally, this protein binds to the 23S rRNA, and is important in its secondary structure. It is located near the subunit interface in the base of the L7/L12 stalk, and near the tRNA binding site of the peptidyltransferase center. This chain is Large ribosomal subunit protein uL6, found in Aeromonas hydrophila subsp. hydrophila (strain ATCC 7966 / DSM 30187 / BCRC 13018 / CCUG 14551 / JCM 1027 / KCTC 2358 / NCIMB 9240 / NCTC 8049).